A 296-amino-acid chain; its full sequence is Thymidylate synthase (296 aa).

DUMP contacts are provided by residues Arg-23 and 157–158 (RR). Cys-177 serves as the catalytic Nucleophile. DUMP contacts are provided by residues 198–201 (RSAD), Asn-209, and 239–241 (HIY). Asp-201 contacts (6R)-5,10-methylene-5,6,7,8-tetrahydrofolate. Residue Ala-295 participates in (6R)-5,10-methylene-5,6,7,8-tetrahydrofolate binding.

This sequence belongs to the thymidylate synthase family. Bacterial-type ThyA subfamily. Homodimer.

The protein resides in the cytoplasm. It catalyses the reaction dUMP + (6R)-5,10-methylene-5,6,7,8-tetrahydrofolate = 7,8-dihydrofolate + dTMP. It participates in pyrimidine metabolism; dTTP biosynthesis. Its function is as follows. Catalyzes the reductive methylation of 2'-deoxyuridine-5'-monophosphate (dUMP) to 2'-deoxythymidine-5'-monophosphate (dTMP) while utilizing 5,10-methylenetetrahydrofolate (mTHF) as the methyl donor and reductant in the reaction, yielding dihydrofolate (DHF) as a by-product. This enzymatic reaction provides an intracellular de novo source of dTMP, an essential precursor for DNA biosynthesis. This Zymomonas mobilis subsp. mobilis (strain ATCC 31821 / ZM4 / CP4) protein is Thymidylate synthase.